Reading from the N-terminus, the 178-residue chain is Large ribosomal subunit protein bL25 (178 aa).

This sequence belongs to the bacterial ribosomal protein bL25 family. CTC subfamily. As to quaternary structure, part of the 50S ribosomal subunit; part of the 5S rRNA/L5/L18/L25 subcomplex. Contacts the 5S rRNA. Binds to the 5S rRNA independently of L5 and L18.

This is one of the proteins that binds to the 5S RNA in the ribosome where it forms part of the central protuberance. In Helicobacter acinonychis (strain Sheeba), this protein is Large ribosomal subunit protein bL25.